We begin with the raw amino-acid sequence, 102 residues long: Large ribosomal subunit protein bL21 (102 aa).

This sequence belongs to the bacterial ribosomal protein bL21 family. Part of the 50S ribosomal subunit. Contacts protein L20.

Its function is as follows. This protein binds to 23S rRNA in the presence of protein L20. The protein is Large ribosomal subunit protein bL21 of Campylobacter jejuni subsp. doylei (strain ATCC BAA-1458 / RM4099 / 269.97).